The sequence spans 834 residues: Periplasmic nitrate reductase (834 aa).

A signal peptide (tat-type signal) is located at residues 1–32; it reads MTDMKIDRRQMLKLEAAAIAAAAAGMPSTSLA. In terms of domain architecture, 4Fe-4S Mo/W bis-MGD-type spans 44-100; that stretch reads LKWDKAACRFCGTGCSVMVATKDNRVVATHGDIKAEVNRGLNCVKGYFLSKIMYGHD. [4Fe-4S] cluster contacts are provided by cysteine 51, cysteine 54, cysteine 58, and cysteine 86. Residues lysine 88, glutamine 155, asparagine 180, cysteine 184, 217 to 224, 248 to 252, 267 to 269, methionine 378, glutamine 382, asparagine 488, 514 to 515, lysine 537, aspartate 564, and 724 to 733 contribute to the Mo-bis(molybdopterin guanine dinucleotide) site; these read WGSNMAEM, STFEH, QTD, SD, and TGRVVEHWHS. Residue tryptophan 800 coordinates substrate. The Mo-bis(molybdopterin guanine dinucleotide) site is built by asparagine 808 and lysine 825.

This sequence belongs to the prokaryotic molybdopterin-containing oxidoreductase family. NasA/NapA/NarB subfamily. Component of the periplasmic nitrate reductase NapAB complex composed of NapA and NapB. Requires [4Fe-4S] cluster as cofactor. Mo-bis(molybdopterin guanine dinucleotide) is required as a cofactor. In terms of processing, predicted to be exported by the Tat system. The position of the signal peptide cleavage has not been experimentally proven.

It localises to the periplasm. The enzyme catalyses 2 Fe(II)-[cytochrome] + nitrate + 2 H(+) = 2 Fe(III)-[cytochrome] + nitrite + H2O. Functionally, catalytic subunit of the periplasmic nitrate reductase complex NapAB. Receives electrons from NapB and catalyzes the reduction of nitrate to nitrite. This is Periplasmic nitrate reductase from Bradyrhizobium sp. (strain BTAi1 / ATCC BAA-1182).